The primary structure comprises 273 residues: Tryptophan synthase alpha chain (273 aa).

Active-site proton acceptor residues include Glu49 and Asp60.

This sequence belongs to the TrpA family. Tetramer of two alpha and two beta chains.

The enzyme catalyses (1S,2R)-1-C-(indol-3-yl)glycerol 3-phosphate + L-serine = D-glyceraldehyde 3-phosphate + L-tryptophan + H2O. The protein operates within amino-acid biosynthesis; L-tryptophan biosynthesis; L-tryptophan from chorismate: step 5/5. In terms of biological role, the alpha subunit is responsible for the aldol cleavage of indoleglycerol phosphate to indole and glyceraldehyde 3-phosphate. In Albidiferax ferrireducens (strain ATCC BAA-621 / DSM 15236 / T118) (Rhodoferax ferrireducens), this protein is Tryptophan synthase alpha chain.